The sequence spans 254 residues: Uridylate kinase (254 aa).

9–12 provides a ligand contact to ATP; sequence KLSG. Residue glycine 51 coordinates UMP. The ATP site is built by glycine 52 and arginine 56. Residues aspartate 72 and 133-140 each bind UMP; that span reads SGNPFFTT. 3 residues coordinate ATP: threonine 160, tyrosine 166, and aspartate 169.

This sequence belongs to the UMP kinase family. As to quaternary structure, homohexamer.

Its subcellular location is the cytoplasm. It carries out the reaction UMP + ATP = UDP + ADP. Its pathway is pyrimidine metabolism; CTP biosynthesis via de novo pathway; UDP from UMP (UMPK route): step 1/1. Inhibited by UTP. Functionally, catalyzes the reversible phosphorylation of UMP to UDP. In Synechococcus sp. (strain JA-3-3Ab) (Cyanobacteria bacterium Yellowstone A-Prime), this protein is Uridylate kinase.